The chain runs to 510 residues: ATP synthase subunit alpha (510 aa).

Residue 169–176 (GDRQTGKT) participates in ATP binding.

The protein belongs to the ATPase alpha/beta chains family. As to quaternary structure, F-type ATPases have 2 components, CF(1) - the catalytic core - and CF(0) - the membrane proton channel. CF(1) has five subunits: alpha(3), beta(3), gamma(1), delta(1), epsilon(1). CF(0) has three main subunits: a(1), b(2) and c(9-12). The alpha and beta chains form an alternating ring which encloses part of the gamma chain. CF(1) is attached to CF(0) by a central stalk formed by the gamma and epsilon chains, while a peripheral stalk is formed by the delta and b chains.

It is found in the cell inner membrane. It catalyses the reaction ATP + H2O + 4 H(+)(in) = ADP + phosphate + 5 H(+)(out). In terms of biological role, produces ATP from ADP in the presence of a proton gradient across the membrane. The alpha chain is a regulatory subunit. This Rickettsia conorii (strain ATCC VR-613 / Malish 7) protein is ATP synthase subunit alpha.